A 257-amino-acid polypeptide reads, in one-letter code: Protein patched homolog 1 (257 aa).

Topologically, residues 1-199 are extracellular; sequence AKLQTGTAYL…LDDILKSFSD (199 aa). 3 N-linked (GlcNAc...) asparagine glycosylation sites follow: Asn-75, Asn-114, and Asn-177. A helical transmembrane segment spans residues 200-220; the sequence is ISVIRVASGYLLMLAYACLTM. In terms of domain architecture, SSD spans 201 to 257; it reads SVIRVASGYLLMLAYACLTMLRWDCAKSQGAVGLAGVLLVALSVAAGLGLCSLIGIS. The Cytoplasmic portion of the chain corresponds to 221 to 235; that stretch reads LRWDCAKSQGAVGLA. Residues 236 to 256 form a helical membrane-spanning segment; it reads GVLLVALSVAAGLGLCSLIGI.

Belongs to the patched family. Glycosylation is necessary for SHH binding. In terms of tissue distribution, in the eye, detected in neural retina, iris, retinal pigment epithelium, but not in lens.

Its subcellular location is the membrane. In terms of biological role, acts as a receptor for sonic hedgehog (SHH), indian hedgehog (IHH) and desert hedgehog (DHH). Associates with the smoothened protein (SMO) to transduce the hedgehog's proteins signal. This chain is Protein patched homolog 1 (PTC1), found in Cynops pyrrhogaster (Japanese fire-bellied newt).